Consider the following 471-residue polypeptide: Glutamate--tRNA ligase (471 aa).

The 'HIGH' region signature appears at 9 to 19 (PSPTGYLHVGG). Residues Cys-98, Cys-100, Cys-125, and His-127 each contribute to the Zn(2+) site. A 'KMSKS' region motif is present at residues 237-241 (KLSKR). Residue Lys-240 coordinates ATP.

The protein belongs to the class-I aminoacyl-tRNA synthetase family. Glutamate--tRNA ligase type 1 subfamily. Monomer. It depends on Zn(2+) as a cofactor.

It is found in the cytoplasm. It catalyses the reaction tRNA(Glu) + L-glutamate + ATP = L-glutamyl-tRNA(Glu) + AMP + diphosphate. Functionally, catalyzes the attachment of glutamate to tRNA(Glu) in a two-step reaction: glutamate is first activated by ATP to form Glu-AMP and then transferred to the acceptor end of tRNA(Glu). This Salmonella gallinarum (strain 287/91 / NCTC 13346) protein is Glutamate--tRNA ligase.